Consider the following 708-residue polypeptide: Leucine-rich repeat neuronal protein 3 (708 aa).

The signal sequence occupies residues 1 to 22; that stretch reads MKDMPLRIHVLLGLAITTLVQA. Residues 23–69 form the LRRNT domain; sequence VDKKVDCPRLCTCEIRPWFTPRSIYMEASTVDCNDLGLLTFPARLPA. Topologically, residues 23–628 are extracellular; it reads VDKKVDCPRL…KEYEKNNTTT (606 aa). 12 LRR repeats span residues 70-91, 93-114, 117-138, 141-162, 165-186, 189-210, 213-234, 237-258, 261-282, 285-304, 310-332, and 335-358; these read NTQILLLQTNNIAKIEYSTDFP, NLTGLDLSQNNLSSVTNINVKK, QLLSVYLEENKLTELPEKCLSE, NLQELYINHNLLSTISPGAFIG, NLLRLHLNSNRLQMINSKWFDA, NLEILMIGENPIIRIKDMNFKP, NLRSLVIAGINLTEIPDNALVG, NLESISFYDNRLIKVPHVALQK, NLKFLDLNKNPINRIRRGDFSN, HLKELGINNMPELISIDSLA, DLRKIEATNNPRLSYIHPNAFFR, and KLESLMLNSNALSALYHGTIESLP. N-linked (GlcNAc...) asparagine glycosylation is found at Asn93 and Asn103. Asn223 is a glycosylation site (N-linked (GlcNAc...) asparagine). Residues 368–421 form the LRRCT domain; sequence NPIRCDCVIRWMNMNKTNIRFMEPDSLFCVDPPEFQGQNVRQVHFRDMMEICLP. Asn382 is a glycosylation site (N-linked (GlcNAc...) asparagine). The Ig-like C2-type domain occupies 421–514; that stretch reads PLIAPESFPS…DLKSVMIKVD (94 aa). Cys444 and Cys496 are joined by a disulfide. N-linked (GlcNAc...) asparagine glycosylation is found at Asn522, Asn579, Asn608, Asn624, and Asn625. The region spanning 523–617 is the Fibronectin type-III domain; it reads GSLNIKIRDI…NVTTKGLHPD (95 aa). The chain crosses the membrane as a helical span at residues 629–649; sequence LMACLGGLLGIIGVICLISCL. Over 650 to 708 the chain is Cytoplasmic; that stretch reads SPEMNCDGGHSYVRNYLQKPTFALGELYPPLINLWEAGKEKSTSLKVKATVIGLPTNMS.

It localises to the membrane. The chain is Leucine-rich repeat neuronal protein 3 (LRRN3) from Homo sapiens (Human).